Consider the following 127-residue polypeptide: Flagellar assembly factor FliW (127 aa).

Belongs to the FliW family. Interacts with translational regulator CsrA and flagellin(s).

It localises to the cytoplasm. Functionally, acts as an anti-CsrA protein, binds CsrA and prevents it from repressing translation of its target genes, one of which is flagellin. Binds to flagellin and participates in the assembly of the flagellum. The polypeptide is Flagellar assembly factor FliW (Campylobacter concisus (strain 13826)).